The following is a 155-amino-acid chain: FHA domain-containing protein FhaB (155 aa).

The chain crosses the membrane as a helical span at residues 6-28 (LQLTRAGFLMLLWVFIWSVLRIL). At Thr-36 the chain carries Phosphothreonine. Residues 83–132 (VLIGRADDSTLVLTDDYASTRHARLSMRGSEWYVEDLGSTNGTYLDRAKV) enclose the FHA domain.

Post-translationally, phosphorylated by PknB. Dephosphorylated by PstP.

The protein localises to the cell membrane. This is FHA domain-containing protein FhaB (fhaB) from Mycobacterium tuberculosis (strain CDC 1551 / Oshkosh).